Reading from the N-terminus, the 73-residue chain is MIEITCNDRLGKKVRVKCNPDDTIGDLKKLIAAQTGTKHEKIVLKKWYTIFKDPIRLSDYEIHDGMNLELYYQ.

The region spanning 1 to 73 is the Ubiquitin-like domain; sequence MIEITCNDRL…DGMNLELYYQ (73 aa).

The protein resides in the cytoplasm. This is Ubiquitin-like protein 5 (ubl) from Drosophila melanogaster (Fruit fly).